A 222-amino-acid chain; its full sequence is Peptide methionine sulfoxide reductase MsrA 1 (222 aa).

Cys57 is a catalytic residue.

This sequence belongs to the MsrA Met sulfoxide reductase family.

The enzyme catalyses L-methionyl-[protein] + [thioredoxin]-disulfide + H2O = L-methionyl-(S)-S-oxide-[protein] + [thioredoxin]-dithiol. The catalysed reaction is [thioredoxin]-disulfide + L-methionine + H2O = L-methionine (S)-S-oxide + [thioredoxin]-dithiol. Has an important function as a repair enzyme for proteins that have been inactivated by oxidation. Catalyzes the reversible oxidation-reduction of methionine sulfoxide in proteins to methionine. The chain is Peptide methionine sulfoxide reductase MsrA 1 (msrA1) from Synechocystis sp. (strain ATCC 27184 / PCC 6803 / Kazusa).